Here is an 85-residue protein sequence, read N- to C-terminus: Putative defensin-like protein 142 (85 aa).

The first 24 residues, 1-24, serve as a signal peptide directing secretion; it reads MKKSFLFTFTVLTIFTILVIGVAP. Cystine bridges form between C30–C78, C41–C63, C46–C73, and C50–C75.

It belongs to the DEFL family.

The protein resides in the secreted. The sequence is that of Putative defensin-like protein 142 (LCR34) from Arabidopsis thaliana (Mouse-ear cress).